The chain runs to 373 residues: Peptide chain release factor 1-like, mitochondrial (373 aa).

The N-terminal 25 residues, 1–25, are a transit peptide targeting the mitochondrion; sequence MRSGFLSGARRLWARRAFSRTPPPS. Positions 56 to 110 form a coiled coil; it reads QLAAAARLLSEKERELRDTESLLHDENEDLKKLAESEIALCQKQITELKHQIISL. The segment at 229–293 is GGQ domain; it reads PKDLRIDTKR…LRARLYSMHL (65 aa). The short motif at 243-245 is the GGQ element; that stretch reads GGQ. Q245 carries the N5-methylglutamine modification.

This sequence belongs to the prokaryotic/mitochondrial release factor family. Methylation of glutamine in the GGQ triplet by HEMK1 is conserved from bacteria to mammals.

Its subcellular location is the mitochondrion. In terms of biological role, mitochondrial peptide chain release factor that directs the termination of translation in response to the peptide chain termination codons UAA and UAG. This is Peptide chain release factor 1-like, mitochondrial (Mtrf1l) from Mus musculus (Mouse).